The following is a 286-amino-acid chain: Pantothenate synthetase (286 aa).

30–37 (MGFLHEGH) lines the ATP pocket. Catalysis depends on histidine 37, which acts as the Proton donor. Glutamine 61 lines the (R)-pantoate pocket. Glutamine 61 is a binding site for beta-alanine. Position 147-150 (147-150 (GLKD)) interacts with ATP. Glutamine 153 provides a ligand contact to (R)-pantoate. ATP is bound by residues valine 176 and 184–187 (KSSR).

Belongs to the pantothenate synthetase family. As to quaternary structure, homodimer.

The protein resides in the cytoplasm. The catalysed reaction is (R)-pantoate + beta-alanine + ATP = (R)-pantothenate + AMP + diphosphate + H(+). Its pathway is cofactor biosynthesis; (R)-pantothenate biosynthesis; (R)-pantothenate from (R)-pantoate and beta-alanine: step 1/1. Functionally, catalyzes the condensation of pantoate with beta-alanine in an ATP-dependent reaction via a pantoyl-adenylate intermediate. This is Pantothenate synthetase from Bacillus subtilis (strain 168).